A 465-amino-acid chain; its full sequence is Methionine aminopeptidase 2-2 (465 aa).

Over residues 1–11 the composition is skewed to basic residues; the sequence is MGSKTPHNHRR. A disordered region spans residues 1-89; it reads MGSKTPHNHR…KKKKNTKELE (89 aa). Over residues 43 to 54 the composition is skewed to acidic residues; the sequence is GESEGGEDEDDD. Positions 73-84 are enriched in basic residues; that stretch reads RNKRKKKKKKKN. Residue His217 coordinates substrate. A divalent metal cation contacts are provided by Asp238, Asp249, and His318. His326 contacts substrate. A divalent metal cation contacts are provided by Glu351 and Glu446.

It belongs to the peptidase M24A family. Methionine aminopeptidase eukaryotic type 2 subfamily. It depends on Co(2+) as a cofactor. Zn(2+) is required as a cofactor. Requires Mn(2+) as cofactor. Fe(2+) serves as cofactor.

It localises to the cytoplasm. The catalysed reaction is Release of N-terminal amino acids, preferentially methionine, from peptides and arylamides.. In terms of biological role, cotranslationally removes the N-terminal methionine from nascent proteins. The N-terminal methionine is often cleaved when the second residue in the primary sequence is small and uncharged (Met-Ala-, Cys, Gly, Pro, Ser, Thr, or Val). This chain is Methionine aminopeptidase 2-2, found in Ajellomyces capsulatus (strain G186AR / H82 / ATCC MYA-2454 / RMSCC 2432) (Darling's disease fungus).